The sequence spans 352 residues: Heat-inducible transcription repressor HrcA (352 aa).

It belongs to the HrcA family.

Negative regulator of class I heat shock genes (grpE-dnaK-dnaJ and groELS operons). Prevents heat-shock induction of these operons. The polypeptide is Heat-inducible transcription repressor HrcA (Ralstonia nicotianae (strain ATCC BAA-1114 / GMI1000) (Ralstonia solanacearum)).